Reading from the N-terminus, the 95-residue chain is Small ribosomal subunit protein bS20c (95 aa).

This sequence belongs to the bacterial ribosomal protein bS20 family.

The protein localises to the plastid. The protein resides in the cyanelle. Functionally, binds directly to 16S ribosomal RNA. The chain is Small ribosomal subunit protein bS20c (rps20) from Cyanophora paradoxa.